The chain runs to 177 residues: Cytochrome c-type biogenesis protein CcmE (177 aa).

Residues 1–8 (MNPRRKSR) are Cytoplasmic-facing. A helical; Signal-anchor for type II membrane protein transmembrane segment spans residues 9–29 (LKVVMAVLSGLAVAVGLTLYA). Topologically, residues 30-177 (LSQNIDLFYT…QISQPFGENK (148 aa)) are periplasmic. The heme site is built by His131 and Tyr135. Residues 134–177 (NYMPPELGDQMKKQHQPMGISEADLKGKSERDATQISQPFGENK) are disordered. Over residues 156–166 (ADLKGKSERDA) the composition is skewed to basic and acidic residues. Over residues 167 to 177 (TQISQPFGENK) the composition is skewed to polar residues.

It belongs to the CcmE/CycJ family.

Its subcellular location is the cell inner membrane. In terms of biological role, heme chaperone required for the biogenesis of c-type cytochromes. Transiently binds heme delivered by CcmC and transfers the heme to apo-cytochromes in a process facilitated by CcmF and CcmH. This Glaesserella parasuis serovar 5 (strain SH0165) (Haemophilus parasuis) protein is Cytochrome c-type biogenesis protein CcmE.